Here is a 265-residue protein sequence, read N- to C-terminus: 4-hydroxy-tetrahydrodipicolinate reductase (265 aa).

Residues Gly7–Met12 and Asp33 contribute to the NAD(+) site. An NADP(+)-binding site is contributed by Arg34. NAD(+)-binding positions include Gly96–Thr98 and Ala120–Met123. His153 functions as the Proton donor/acceptor in the catalytic mechanism. Position 154 (His154) interacts with (S)-2,3,4,5-tetrahydrodipicolinate. The Proton donor role is filled by Lys157. Position 163-164 (Gly163–Thr164) interacts with (S)-2,3,4,5-tetrahydrodipicolinate.

It belongs to the DapB family.

The protein resides in the cytoplasm. The catalysed reaction is (S)-2,3,4,5-tetrahydrodipicolinate + NAD(+) + H2O = (2S,4S)-4-hydroxy-2,3,4,5-tetrahydrodipicolinate + NADH + H(+). It catalyses the reaction (S)-2,3,4,5-tetrahydrodipicolinate + NADP(+) + H2O = (2S,4S)-4-hydroxy-2,3,4,5-tetrahydrodipicolinate + NADPH + H(+). It functions in the pathway amino-acid biosynthesis; L-lysine biosynthesis via DAP pathway; (S)-tetrahydrodipicolinate from L-aspartate: step 4/4. In terms of biological role, catalyzes the conversion of 4-hydroxy-tetrahydrodipicolinate (HTPA) to tetrahydrodipicolinate. The chain is 4-hydroxy-tetrahydrodipicolinate reductase from Burkholderia multivorans (strain ATCC 17616 / 249).